The sequence spans 367 residues: Probable cinnamyl alcohol dehydrogenase (367 aa).

C47 is a Zn(2+) binding site. T49 provides a ligand contact to NADP(+). Zn(2+) contacts are provided by H69, E70, C100, C103, C106, C114, and C163. NADP(+)-binding positions include T167, 188–193 (GLGGVG), 211–216 (SSSSKK), T251, G275, and 298–300 (SFI).

Belongs to the zinc-containing alcohol dehydrogenase family. Homodimer. The cofactor is Zn(2+).

It carries out the reaction (E)-cinnamyl alcohol + NADP(+) = (E)-cinnamaldehyde + NADPH + H(+). The enzyme catalyses (E)-coniferol + NADP(+) = (E)-coniferaldehyde + NADPH + H(+). It catalyses the reaction (E)-sinapyl alcohol + NADP(+) = (E)-sinapaldehyde + NADPH + H(+). The catalysed reaction is (E)-4-coumaroyl alcohol + NADP(+) = (E)-4-coumaraldehyde + NADPH + H(+). It carries out the reaction (E)-caffeyl alcohol + NADP(+) = (E)-caffeyl aldehyde + NADPH + H(+). The protein operates within aromatic compound metabolism; phenylpropanoid biosynthesis. Its function is as follows. Involved in lignin biosynthesis. May catalyze the final step specific for the production of lignin monomers, like coniferyl alcohol, sinapyl alcohol and 4-coumaryl alcohol. The sequence is that of Probable cinnamyl alcohol dehydrogenase from Zea mays (Maize).